The primary structure comprises 70 residues: Large ribosomal subunit protein uL29 (70 aa).

The protein belongs to the universal ribosomal protein uL29 family.

In Symbiobacterium thermophilum (strain DSM 24528 / JCM 14929 / IAM 14863 / T), this protein is Large ribosomal subunit protein uL29.